Consider the following 492-residue polypeptide: ATP synthase subunit beta, chloroplastic (492 aa).

Position 170–177 (170–177 (GGAGVGKT)) interacts with ATP.

It belongs to the ATPase alpha/beta chains family. As to quaternary structure, F-type ATPases have 2 components, CF(1) - the catalytic core - and CF(0) - the membrane proton channel. CF(1) has five subunits: alpha(3), beta(3), gamma(1), delta(1), epsilon(1). CF(0) has four main subunits: a(1), b(1), b'(1) and c(9-12).

It is found in the plastid. The protein localises to the chloroplast thylakoid membrane. The enzyme catalyses ATP + H2O + 4 H(+)(in) = ADP + phosphate + 5 H(+)(out). Produces ATP from ADP in the presence of a proton gradient across the membrane. The catalytic sites are hosted primarily by the beta subunits. In Angiopteris evecta (Mule's foot fern), this protein is ATP synthase subunit beta, chloroplastic.